The primary structure comprises 424 residues: CinA-like protein (424 aa).

It belongs to the CinA family.

The protein is CinA-like protein of Nostoc sp. (strain PCC 7120 / SAG 25.82 / UTEX 2576).